The sequence spans 257 residues: 1-(5-phosphoribosyl)-5-[(5-phosphoribosylamino)methylideneamino] imidazole-4-carboxamide isomerase (257 aa).

D8 functions as the Proton acceptor in the catalytic mechanism. D129 (proton donor) is an active-site residue.

It belongs to the HisA/HisF family.

It is found in the cytoplasm. It catalyses the reaction 1-(5-phospho-beta-D-ribosyl)-5-[(5-phospho-beta-D-ribosylamino)methylideneamino]imidazole-4-carboxamide = 5-[(5-phospho-1-deoxy-D-ribulos-1-ylimino)methylamino]-1-(5-phospho-beta-D-ribosyl)imidazole-4-carboxamide. The protein operates within amino-acid biosynthesis; L-histidine biosynthesis; L-histidine from 5-phospho-alpha-D-ribose 1-diphosphate: step 4/9. This Crocosphaera subtropica (strain ATCC 51142 / BH68) (Cyanothece sp. (strain ATCC 51142)) protein is 1-(5-phosphoribosyl)-5-[(5-phosphoribosylamino)methylideneamino] imidazole-4-carboxamide isomerase.